The sequence spans 1148 residues: Ice nucleation protein (1148 aa).

Disordered regions lie at residues 110–131, 222–256, and 367–394; these read ADPA…PTAI, YGST…GYGS, and GSTQ…GSNL. The span at 114–128 shows a compositional bias: low complexity; the sequence is STSTSTSTSTLTPMP. Residues 180 to 1099 are octapeptide periodicity; the sequence is ATYGSTLSGD…LSAGEDSTLI (920 aa). Polar residues predominate over residues 230–250; that stretch reads EDSSLTAGYGSTQTAQEGSNL.

This sequence belongs to the bacterial ice nucleation protein family.

It is found in the cell outer membrane. Its function is as follows. Ice nucleation proteins enable bacteria to nucleate crystallization in supercooled water. This is Ice nucleation protein (inaK) from Pseudomonas syringae.